Here is a 162-residue protein sequence, read N- to C-terminus: Cyclic pyranopterin monophosphate synthase (162 aa).

Substrate-binding positions include 75–77 (LCH) and 113–114 (ME). Residue Asp128 is part of the active site.

Belongs to the MoaC family. In terms of assembly, homohexamer; trimer of dimers.

It carries out the reaction (8S)-3',8-cyclo-7,8-dihydroguanosine 5'-triphosphate = cyclic pyranopterin phosphate + diphosphate. The protein operates within cofactor biosynthesis; molybdopterin biosynthesis. Catalyzes the conversion of (8S)-3',8-cyclo-7,8-dihydroguanosine 5'-triphosphate to cyclic pyranopterin monophosphate (cPMP). The polypeptide is Cyclic pyranopterin monophosphate synthase (Klebsiella pneumoniae subsp. pneumoniae (strain ATCC 700721 / MGH 78578)).